A 162-amino-acid chain; its full sequence is NADH-quinone oxidoreductase subunit I (162 aa).

2 4Fe-4S ferredoxin-type domains span residues 52-82 (LRRYPNGEERCIACKLCEAICPAQAITIEAG) and 93-122 (TRYDIDMVKCIYCGMCQEACPVDAIVEGPN). [4Fe-4S] cluster-binding residues include cysteine 62, cysteine 65, cysteine 68, cysteine 72, cysteine 102, cysteine 105, cysteine 108, and cysteine 112.

The protein belongs to the complex I 23 kDa subunit family. NDH-1 is composed of 14 different subunits. Subunits NuoA, H, J, K, L, M, N constitute the membrane sector of the complex. The cofactor is [4Fe-4S] cluster.

The protein localises to the cell inner membrane. The enzyme catalyses a quinone + NADH + 5 H(+)(in) = a quinol + NAD(+) + 4 H(+)(out). NDH-1 shuttles electrons from NADH, via FMN and iron-sulfur (Fe-S) centers, to quinones in the respiratory chain. The immediate electron acceptor for the enzyme in this species is believed to be ubiquinone. Couples the redox reaction to proton translocation (for every two electrons transferred, four hydrogen ions are translocated across the cytoplasmic membrane), and thus conserves the redox energy in a proton gradient. The chain is NADH-quinone oxidoreductase subunit I from Methylobacterium radiotolerans (strain ATCC 27329 / DSM 1819 / JCM 2831 / NBRC 15690 / NCIMB 10815 / 0-1).